A 148-amino-acid chain; its full sequence is UPF0178 protein lpl0088 (148 aa).

Belongs to the UPF0178 family.

The polypeptide is UPF0178 protein lpl0088 (Legionella pneumophila (strain Lens)).